Reading from the N-terminus, the 446-residue chain is Xylose isomerase 2 (446 aa).

Active-site residues include histidine 109 and aspartate 112. 7 residues coordinate Mg(2+): glutamate 240, glutamate 276, histidine 279, aspartate 304, aspartate 315, aspartate 317, and aspartate 347.

It belongs to the xylose isomerase family. Homotetramer. It depends on Mg(2+) as a cofactor.

Its subcellular location is the cytoplasm. The catalysed reaction is alpha-D-xylose = alpha-D-xylulofuranose. This is Xylose isomerase 2 from Xanthomonas campestris pv. campestris (strain 8004).